Consider the following 948-residue polypeptide: Insulin receptor substrate 1 (948 aa).

Residues Gly8–Arg109 enclose the PH domain. The region spanning Tyr122–Asn236 is the IRS-type PTB domain. The tract at residues Pro247–Val270 is disordered. Residues Ser286 and Ser287 each carry the phosphoserine modification. The segment covering Arg304–Ser329 has biased composition (polar residues). The tract at residues Arg304–Tyr373 is disordered. Ser342 carries the post-translational modification Phosphoserine. At Tyr410 the chain carries Phosphotyrosine; by INSR. The short motif at Tyr410–Met413 is the YXXM motif 1 element. The disordered stretch occupies residues Ala528–Ser559. Residues Asn529–Pro556 show a composition bias toward polar residues. Ser554 carries the post-translational modification Phosphoserine. A YXXM motif 2 motif is present at residues Tyr640–Met643. The disordered stretch occupies residues Glu703 to Asn734. Over residues Thr720–Ser731 the composition is skewed to basic and acidic residues. A Phosphotyrosine; by INSR modification is found at Tyr891. Residues Tyr907–Thr948 are disordered. Phosphoserine is present on residues Ser912 and Ser915. Position 928 is a phosphotyrosine; by INSR (Tyr928). Residues Ser936–Thr948 are compositionally biased toward low complexity.

In terms of assembly, bindings to phosphatidylinositol 3-kinase and SHP2.

In terms of biological role, activates phosphatidylinositol 3-kinase when bound to the regulatory p85 subunit. May mediate the control of various cellular processes by insulin-like peptides. When phosphorylated by the insulin receptor binds specifically to various cellular proteins containing SH2 domains. Involved in control of cell proliferation, cell size, and body and organ growth throughout development. Also has a role in a signaling pathway controlling the physiological response required to endure periods of low nutrient conditions. Insulin/insulin-like growth factor (IGF) signaling pathway has a role in regulating aging and is necessary in the ovary for vitellogenic maturation. This chain is Insulin receptor substrate 1, found in Drosophila erecta (Fruit fly).